The chain runs to 116 residues: uncharacterized protein (116 aa).

The segment at 64-116 (RRFYSGTVNRNARSAGAASRSTSSVKRPLESKKRNARPETEKWCASYSAGNRR) is disordered. Residues 73-87 (RNARSAGAASRSTSS) show a composition bias toward low complexity. Residues 90-105 (RPLESKKRNARPETEK) show a composition bias toward basic and acidic residues.

This is an uncharacterized protein from Saccharomyces cerevisiae (strain ATCC 204508 / S288c) (Baker's yeast).